Here is a 169-residue protein sequence, read N- to C-terminus: MSEVEYRCFVGGLAWATGDAELERTFSQFGEVIDSKIINDRETGRSRGFGFVTFKDEKSMKDAIDEMNGKELDGRTITVNEAQSRGGGGGGGRGGGGYGGRGGGGYGGGGGGYGDRRGGGGYGSGGGGRGGGGYGSGGGGYGGGGGRRDGGGYGGGDGGYGGGSGGGGW.

Residues 6 to 84 (YRCFVGGLAW…RTITVNEAQS (79 aa)) form the RRM domain. Disordered regions lie at residues 80–101 (NEAQ…YGGR) and 121–169 (GYGS…GGGW). The segment covering 85-101 (RGGGGGGGRGGGGYGGR) has biased composition (gly residues).

As to expression, expressed only in roots and stems.

Functionally, possibly has a role in RNA transcription or processing during stress. This Brassica napus (Rape) protein is Glycine-rich RNA-binding protein 10 (GRP10).